The following is a 158-amino-acid chain: NAD(P)H-quinone oxidoreductase subunit J, chloroplastic (158 aa).

It belongs to the complex I 30 kDa subunit family. As to quaternary structure, NDH is composed of at least 16 different subunits, 5 of which are encoded in the nucleus.

It localises to the plastid. The protein resides in the chloroplast thylakoid membrane. It carries out the reaction a plastoquinone + NADH + (n+1) H(+)(in) = a plastoquinol + NAD(+) + n H(+)(out). The catalysed reaction is a plastoquinone + NADPH + (n+1) H(+)(in) = a plastoquinol + NADP(+) + n H(+)(out). Functionally, NDH shuttles electrons from NAD(P)H:plastoquinone, via FMN and iron-sulfur (Fe-S) centers, to quinones in the photosynthetic chain and possibly in a chloroplast respiratory chain. The immediate electron acceptor for the enzyme in this species is believed to be plastoquinone. Couples the redox reaction to proton translocation, and thus conserves the redox energy in a proton gradient. This is NAD(P)H-quinone oxidoreductase subunit J, chloroplastic from Panax ginseng (Korean ginseng).